The chain runs to 195 residues: ATP-dependent Clp protease proteolytic subunit (195 aa).

Residue S98 is the Nucleophile of the active site. The active site involves H123.

It belongs to the peptidase S14 family. As to quaternary structure, fourteen ClpP subunits assemble into 2 heptameric rings which stack back to back to give a disk-like structure with a central cavity, resembling the structure of eukaryotic proteasomes.

The protein resides in the cytoplasm. It catalyses the reaction Hydrolysis of proteins to small peptides in the presence of ATP and magnesium. alpha-casein is the usual test substrate. In the absence of ATP, only oligopeptides shorter than five residues are hydrolyzed (such as succinyl-Leu-Tyr-|-NHMec, and Leu-Tyr-Leu-|-Tyr-Trp, in which cleavage of the -Tyr-|-Leu- and -Tyr-|-Trp bonds also occurs).. Its function is as follows. Cleaves peptides in various proteins in a process that requires ATP hydrolysis. Has a chymotrypsin-like activity. Plays a major role in the degradation of misfolded proteins. The polypeptide is ATP-dependent Clp protease proteolytic subunit (Helicobacter pylori (strain G27)).